The chain runs to 519 residues: Cyclic AMP-responsive element-binding protein 3-like protein 1 (519 aa).

A required for transcription activation region spans residues 1-60; it reads MDAVLEPFPADRLFPGSSFLDLGDLNESDFLNNAHFPEHLDHFVENMEDFSNDLFSSFFD. Topologically, residues 1 to 376 are cytoplasmic; sequence MDAVLEPFPA…MAATQTGTCL (376 aa). Lys-184 is covalently cross-linked (Glycyl lysine isopeptide (Lys-Gly) (interchain with G-Cter in SUMO2)). Residues 200–259 form a disordered region; it reads DLVQMPPTPPSSHGSDSDGSQSPRSLPPSSPVRPMARSSTAISTSPLLTAPHKLQGTSGP. Over residues 210 to 223 the composition is skewed to low complexity; it reads SSHGSDSDGSQSPR. A compositionally biased stretch (polar residues) spans 236–246; sequence RSSTAISTSPL. One can recognise a bZIP domain in the interval 290-353; it reads ALKRVRRKIK…RTLLQQLQKL (64 aa). The interval 292-321 is basic motif; the sequence is KRVRRKIKNKISAQESRRKKKEYVECLEKK. A leucine-zipper region spans residues 332–353; that stretch reads LWKKVETLETANRTLLQQLQKL. The helical; Signal-anchor for type II membrane protein transmembrane segment at 377 to 397 threads the bilayer; the sequence is MVAALCFVLVLGSLVPCLPAF. An S2P recognition motif is present at residues 392 to 395; it reads PCLP. Topologically, residues 398 to 519 are lumenal; sequence SSGSMTVKED…LGPNTTIKLS (122 aa). The short motif at 423-426 is the S1P recognition element; that stretch reads RSLL. The interval 449–519 is disordered; the sequence is EGWELKPGGP…LGPNTTIKLS (71 aa). The span at 462–486 shows a compositional bias: basic and acidic residues; sequence RPQDHLRHDRADSIHETTKYLRETW. N-linked (GlcNAc...) asparagine glycosylation is found at Asn-493, Asn-498, and Asn-513.

Belongs to the bZIP family. ATF subfamily. Interacts with SMAD4, the interaction takes place upon TGFB1 induction and SMAD4 acts as a CREB3L1 coactivator to induce the expression of genes involved in assembly of collagen extracellular matrix. Post-translationally, N-glycosylated. In terms of processing, ubiquitinated by HRD1/SYVN1; undergoes 'Lys-48'-linked ubiquitination, followed by rapid proteasomal degradation under normal conditions. Upon ER stress, SYVN1 E3 ubiquitin-protein ligase dissociates from its substrate, ubiquitination does not occur and CREB3L1 is stabilized. Upon ER stress or DNA damage, translocated to the Golgi apparatus, where it is processed by regulated intramembrane proteolysis (RIP) to release the cytosol-facing N-terminal transcription factor domain. The cleavage is performed sequentially by site-1 and site-2 proteases (S1P/MBTPS1 and S2P/MBTPS2). RIP is induced by TGFB1 and ceramide. In terms of tissue distribution, expressed in cortical and trabecular bones. Highly expressed in osteoblasts, but not detected in osteoclasts, nor in macrophages. Expressed at relatively low levels in lung and kidney. Weakly expressed in brain and spleen. Expressed in astrocytes.

The protein resides in the endoplasmic reticulum membrane. Its subcellular location is the nucleus. In terms of biological role, precursor of the transcription factor form (Processed cyclic AMP-responsive element-binding protein 3-like protein 1), which is embedded in the endoplasmic reticulum membrane with N-terminal DNA-binding and transcription activation domains oriented toward the cytosolic face of the membrane. In response to ER stress or DNA damage, transported to the Golgi, where it is cleaved in a site-specific manner by resident proteases S1P/MBTPS1 and S2P/MBTPS2. The released N-terminal cytosolic domain is translocated to the nucleus where it activates transcription of specific target genes involved in the cell-cycle progression inhibition. Functionally, transcription factor involved in cell type specific DNA damage and unfolded protein response (UPR). Binds the DNA consensus sequence 5'-GTGXGCXGC-3'. Plays a critical role in bone formation through the transcription of COL1A1, and possibly COL1A2, and the secretion of bone matrix proteins. Directly binds to the UPR element (UPRE)-like sequence in an osteoblast-specific COL1A1 promoter region and induces its transcription. Does not regulate COL1A1 in other tissues, such as skin. Required to protect astrocytes from ER stress-induced cell death. In astrocytes, binds to the cAMP response element (CRE) of the BiP/HSPA5 promoter and participate in its transcriptional activation. In astrocytes and osteoblasts, upon DNA damage, inhibits cell-cycle progression after G2/M phase by binding to promoters and activating transcription of genes encoding cell-cycle inhibitors, such as p21/CDKN1A. Required for TGFB1 to activate genes involved in the assembly of collagen extracellular matrix. The protein is Cyclic AMP-responsive element-binding protein 3-like protein 1 (Creb3l1) of Mus musculus (Mouse).